The chain runs to 697 residues: Elongation factor G (697 aa).

The tr-type G domain maps to E8–V290. Residues A17 to T24, D88 to H92, and N142 to D145 contribute to the GTP site.

It belongs to the TRAFAC class translation factor GTPase superfamily. Classic translation factor GTPase family. EF-G/EF-2 subfamily.

Its subcellular location is the cytoplasm. Catalyzes the GTP-dependent ribosomal translocation step during translation elongation. During this step, the ribosome changes from the pre-translocational (PRE) to the post-translocational (POST) state as the newly formed A-site-bound peptidyl-tRNA and P-site-bound deacylated tRNA move to the P and E sites, respectively. Catalyzes the coordinated movement of the two tRNA molecules, the mRNA and conformational changes in the ribosome. This Methylobacillus flagellatus (strain ATCC 51484 / DSM 6875 / VKM B-1610 / KT) protein is Elongation factor G.